A 113-amino-acid polypeptide reads, in one-letter code: Large ribosomal subunit protein uL22 (113 aa).

The protein belongs to the universal ribosomal protein uL22 family. As to quaternary structure, part of the 50S ribosomal subunit.

This protein binds specifically to 23S rRNA; its binding is stimulated by other ribosomal proteins, e.g. L4, L17, and L20. It is important during the early stages of 50S assembly. It makes multiple contacts with different domains of the 23S rRNA in the assembled 50S subunit and ribosome. In terms of biological role, the globular domain of the protein is located near the polypeptide exit tunnel on the outside of the subunit, while an extended beta-hairpin is found that lines the wall of the exit tunnel in the center of the 70S ribosome. The chain is Large ribosomal subunit protein uL22 from Bacillus mycoides (strain KBAB4) (Bacillus weihenstephanensis).